The primary structure comprises 354 residues: Uroporphyrinogen decarboxylase (354 aa).

Substrate is bound by residues 27 to 31, Asp-77, Tyr-154, Thr-209, and His-327; that span reads RQAGR.

The protein belongs to the uroporphyrinogen decarboxylase family. Homodimer.

It localises to the cytoplasm. It catalyses the reaction uroporphyrinogen III + 4 H(+) = coproporphyrinogen III + 4 CO2. The protein operates within porphyrin-containing compound metabolism; protoporphyrin-IX biosynthesis; coproporphyrinogen-III from 5-aminolevulinate: step 4/4. In terms of biological role, catalyzes the decarboxylation of four acetate groups of uroporphyrinogen-III to yield coproporphyrinogen-III. This chain is Uroporphyrinogen decarboxylase, found in Actinobacillus succinogenes (strain ATCC 55618 / DSM 22257 / CCUG 43843 / 130Z).